A 275-amino-acid polypeptide reads, in one-letter code: Rhamnulose-1-phosphate aldolase (275 aa).

E117 is a catalytic residue. Residues H141, H143, and H212 each contribute to the Zn(2+) site.

It belongs to the aldolase class II family. RhaD subfamily. Homotetramer. It depends on Zn(2+) as a cofactor.

The protein localises to the cytoplasm. It carries out the reaction L-rhamnulose 1-phosphate = (S)-lactaldehyde + dihydroxyacetone phosphate. It functions in the pathway carbohydrate degradation; L-rhamnose degradation; glycerone phosphate from L-rhamnose: step 3/3. Functionally, catalyzes the reversible cleavage of L-rhamnulose-1-phosphate to dihydroxyacetone phosphate (DHAP) and L-lactaldehyde. This chain is Rhamnulose-1-phosphate aldolase, found in Salmonella dublin (strain CT_02021853).